The chain runs to 728 residues: Probable subtilase-type serine protease DR_A0283 (728 aa).

A signal peptide spans 1-22 (MPGALPMKKISLAVLSLTTLLA). A propeptide spanning residues 23–148 (ACGQPQTSPQ…RTAQDQLGAQ (126 aa)) is cleaved from the precursor. Residues 159-471 (QYALDSNHLH…YGLIRMDKLA (313 aa)) enclose the Peptidase S8 domain. Active-site charge relay system residues include Asp188, His242, and Ser412.

This sequence belongs to the peptidase S8 family.

The protein localises to the secreted. The chain is Probable subtilase-type serine protease DR_A0283 from Deinococcus radiodurans (strain ATCC 13939 / DSM 20539 / JCM 16871 / CCUG 27074 / LMG 4051 / NBRC 15346 / NCIMB 9279 / VKM B-1422 / R1).